Reading from the N-terminus, the 190-residue chain is MRIGILAIQGSVVEHEKMLKRLEVETVLVKKPEHLDIINGIILPGGESTTFFTLLENRLLFDVLREKLANGLPAMGTCAGLILLANRIENHPDQKTLKVLDITVSRNAYGRQRESFSTYIKIPILGEKEFECVFIRAPQIVEIGKNVKVHATFENKPIFVEEGNILGLTFHPELTDDLRIHEYFLKRCSE.

An L-glutamine-binding site is contributed by 46-48 (GES). Residue C78 is the Nucleophile of the active site. L-glutamine-binding positions include R106 and 135-136 (IR). Catalysis depends on charge relay system residues H171 and E173.

This sequence belongs to the glutaminase PdxT/SNO family. In terms of assembly, in the presence of PdxS, forms a dodecamer of heterodimers. Only shows activity in the heterodimer.

It catalyses the reaction aldehydo-D-ribose 5-phosphate + D-glyceraldehyde 3-phosphate + L-glutamine = pyridoxal 5'-phosphate + L-glutamate + phosphate + 3 H2O + H(+). The enzyme catalyses L-glutamine + H2O = L-glutamate + NH4(+). It participates in cofactor biosynthesis; pyridoxal 5'-phosphate biosynthesis. Catalyzes the hydrolysis of glutamine to glutamate and ammonia as part of the biosynthesis of pyridoxal 5'-phosphate. The resulting ammonia molecule is channeled to the active site of PdxS. This Dictyoglomus turgidum (strain DSM 6724 / Z-1310) protein is Pyridoxal 5'-phosphate synthase subunit PdxT.